The chain runs to 74 residues: Translation initiation factor IF-1 2 (74 aa).

The region spanning 1–73 is the S1-like domain; that stretch reads MTKNKNVIEV…TRGRIVFRYR (73 aa).

The protein belongs to the IF-1 family. In terms of assembly, component of the 30S ribosomal translation pre-initiation complex which assembles on the 30S ribosome in the order IF-2 and IF-3, IF-1 and N-formylmethionyl-tRNA(fMet); mRNA recruitment can occur at any time during PIC assembly.

It is found in the cytoplasm. One of the essential components for the initiation of protein synthesis. Stabilizes the binding of IF-2 and IF-3 on the 30S subunit to which N-formylmethionyl-tRNA(fMet) subsequently binds. Helps modulate mRNA selection, yielding the 30S pre-initiation complex (PIC). Upon addition of the 50S ribosomal subunit IF-1, IF-2 and IF-3 are released leaving the mature 70S translation initiation complex. This Streptomyces avermitilis (strain ATCC 31267 / DSM 46492 / JCM 5070 / NBRC 14893 / NCIMB 12804 / NRRL 8165 / MA-4680) protein is Translation initiation factor IF-1 2.